A 280-amino-acid chain; its full sequence is Tryptophan synthase alpha chain (280 aa).

Catalysis depends on proton acceptor residues E50 and D61.

This sequence belongs to the TrpA family. Tetramer of two alpha and two beta chains.

The enzyme catalyses (1S,2R)-1-C-(indol-3-yl)glycerol 3-phosphate + L-serine = D-glyceraldehyde 3-phosphate + L-tryptophan + H2O. The protein operates within amino-acid biosynthesis; L-tryptophan biosynthesis; L-tryptophan from chorismate: step 5/5. The alpha subunit is responsible for the aldol cleavage of indoleglycerol phosphate to indole and glyceraldehyde 3-phosphate. The protein is Tryptophan synthase alpha chain of Methylorubrum extorquens (strain CM4 / NCIMB 13688) (Methylobacterium extorquens).